The sequence spans 596 residues: ATP-binding protein Uup (596 aa).

ABC transporter domains are found at residues 1–222 and 290–516; these read MSLI…RIEK and FKLD…SKIN. Residues 36–43 and 322–329 each bind ATP; these read GKNGAGKS and GDNGCGKS. The C-terminal domain (CTD), binds DNA stretch occupies residues 519-596; it reads IKIKNNFKKE…LEKNIINTKI (78 aa).

The protein belongs to the ABC transporter superfamily. ABCF family. Uup subfamily.

The protein localises to the cytoplasm. It carries out the reaction ATP + H2O = ADP + phosphate + H(+). Its function is as follows. Probably plays a role in ribosome assembly or function. May be involved in resolution of branched DNA intermediates that result from template switching in postreplication gaps. Binds DNA and has ATPase activity. This is ATP-binding protein Uup from Buchnera aphidicola subsp. Acyrthosiphon pisum (strain APS) (Acyrthosiphon pisum symbiotic bacterium).